Here is a 444-residue protein sequence, read N- to C-terminus: Methylenetetrahydrofolate--tRNA-(uracil-5-)-methyltransferase TrmFO (444 aa).

10–15 (GAGLAG) contributes to the FAD binding site.

Belongs to the MnmG family. TrmFO subfamily. FAD is required as a cofactor.

It is found in the cytoplasm. The enzyme catalyses uridine(54) in tRNA + (6R)-5,10-methylene-5,6,7,8-tetrahydrofolate + NADH + H(+) = 5-methyluridine(54) in tRNA + (6S)-5,6,7,8-tetrahydrofolate + NAD(+). It carries out the reaction uridine(54) in tRNA + (6R)-5,10-methylene-5,6,7,8-tetrahydrofolate + NADPH + H(+) = 5-methyluridine(54) in tRNA + (6S)-5,6,7,8-tetrahydrofolate + NADP(+). In terms of biological role, catalyzes the folate-dependent formation of 5-methyl-uridine at position 54 (M-5-U54) in all tRNAs. The sequence is that of Methylenetetrahydrofolate--tRNA-(uracil-5-)-methyltransferase TrmFO from Streptococcus agalactiae serotype III (strain NEM316).